We begin with the raw amino-acid sequence, 309 residues long: tRNA dimethylallyltransferase (309 aa).

Gly-11–Ser-18 contacts ATP. Thr-13 to Ser-18 lines the substrate pocket. 2 interaction with substrate tRNA regions span residues Asp-36–Gln-39 and Gln-160–Arg-164.

It belongs to the IPP transferase family. As to quaternary structure, monomer. It depends on Mg(2+) as a cofactor.

It catalyses the reaction adenosine(37) in tRNA + dimethylallyl diphosphate = N(6)-dimethylallyladenosine(37) in tRNA + diphosphate. Functionally, catalyzes the transfer of a dimethylallyl group onto the adenine at position 37 in tRNAs that read codons beginning with uridine, leading to the formation of N6-(dimethylallyl)adenosine (i(6)A). The sequence is that of tRNA dimethylallyltransferase from Rickettsia felis (strain ATCC VR-1525 / URRWXCal2) (Rickettsia azadi).